Consider the following 516-residue polypeptide: Maturase K (516 aa).

Belongs to the intron maturase 2 family. MatK subfamily.

It is found in the plastid. It localises to the chloroplast. Functionally, usually encoded in the trnK tRNA gene intron. Probably assists in splicing its own and other chloroplast group II introns. This Colchicum speciosum (Giant meadow saffron) protein is Maturase K.